A 394-amino-acid polypeptide reads, in one-letter code: Elongation factor Tu (394 aa).

Residues 10-204 (KAHVNIGTIG…SVDSYIPTPT (195 aa)) form the tr-type G domain. The tract at residues 19–26 (GHIDHGKT) is G1. 19–26 (GHIDHGKT) contacts GTP. Thr-26 contributes to the Mg(2+) binding site. Residues 60–64 (GITIN) form a G2 region. The tract at residues 81-84 (DCPG) is G3. Residues 81–85 (DCPGH) and 136–139 (NKCD) contribute to the GTP site. Residues 136–139 (NKCD) form a G4 region. Positions 174–176 (SAL) are G5.

The protein belongs to the TRAFAC class translation factor GTPase superfamily. Classic translation factor GTPase family. EF-Tu/EF-1A subfamily. Monomer.

It is found in the cytoplasm. The catalysed reaction is GTP + H2O = GDP + phosphate + H(+). In terms of biological role, GTP hydrolase that promotes the GTP-dependent binding of aminoacyl-tRNA to the A-site of ribosomes during protein biosynthesis. The sequence is that of Elongation factor Tu from Malacoplasma penetrans (strain HF-2) (Mycoplasma penetrans).